Reading from the N-terminus, the 121-residue chain is Small ribosomal subunit protein uS13 (121 aa).

Positions 91-121 are disordered; it reads HRMSLPVRGQRTRTNARTRRGSRKTVAGRKK. A compositionally biased stretch (basic residues) spans 100 to 121; it reads QRTRTNARTRRGSRKTVAGRKK.

Belongs to the universal ribosomal protein uS13 family. As to quaternary structure, part of the 30S ribosomal subunit. Forms a loose heterodimer with protein S19. Forms two bridges to the 50S subunit in the 70S ribosome.

Its function is as follows. Located at the top of the head of the 30S subunit, it contacts several helices of the 16S rRNA. In the 70S ribosome it contacts the 23S rRNA (bridge B1a) and protein L5 of the 50S subunit (bridge B1b), connecting the 2 subunits; these bridges are implicated in subunit movement. Contacts the tRNAs in the A and P-sites. The polypeptide is Small ribosomal subunit protein uS13 (Prochlorococcus marinus (strain MIT 9312)).